A 252-amino-acid polypeptide reads, in one-letter code: Imidazole glycerol phosphate synthase subunit HisF (252 aa).

Catalysis depends on residues D11 and D130.

Belongs to the HisA/HisF family. Heterodimer of HisH and HisF.

The protein localises to the cytoplasm. The catalysed reaction is 5-[(5-phospho-1-deoxy-D-ribulos-1-ylimino)methylamino]-1-(5-phospho-beta-D-ribosyl)imidazole-4-carboxamide + L-glutamine = D-erythro-1-(imidazol-4-yl)glycerol 3-phosphate + 5-amino-1-(5-phospho-beta-D-ribosyl)imidazole-4-carboxamide + L-glutamate + H(+). It participates in amino-acid biosynthesis; L-histidine biosynthesis; L-histidine from 5-phospho-alpha-D-ribose 1-diphosphate: step 5/9. IGPS catalyzes the conversion of PRFAR and glutamine to IGP, AICAR and glutamate. The HisF subunit catalyzes the cyclization activity that produces IGP and AICAR from PRFAR using the ammonia provided by the HisH subunit. This is Imidazole glycerol phosphate synthase subunit HisF from Staphylococcus aureus (strain MRSA252).